Reading from the N-terminus, the 205-residue chain is Cytochrome c biogenesis ATP-binding export protein CcmA 1 (205 aa).

The 204-residue stretch at 2 to 205 (LEARDLYCER…LALTGGEAGL (204 aa)) folds into the ABC transporter domain. 34-41 (GGNGAGKT) lines the ATP pocket.

The protein belongs to the ABC transporter superfamily. CcmA exporter (TC 3.A.1.107) family. As to quaternary structure, the complex is composed of two ATP-binding proteins (CcmA) and two transmembrane proteins (CcmB).

The protein resides in the cell inner membrane. The enzyme catalyses heme b(in) + ATP + H2O = heme b(out) + ADP + phosphate + H(+). Part of the ABC transporter complex CcmAB involved in the biogenesis of c-type cytochromes; once thought to export heme, this seems not to be the case, but its exact role is uncertain. Responsible for energy coupling to the transport system. In Salmonella paratyphi A (strain ATCC 9150 / SARB42), this protein is Cytochrome c biogenesis ATP-binding export protein CcmA 1.